A 76-amino-acid polypeptide reads, in one-letter code: Rhesus theta defensin-1/2 subunit B (76 aa).

An N-terminal signal peptide occupies residues 1 to 22; it reads MRTFALLTAMLLLVALHAQAEA. Residues 23–64 constitute a propeptide that is removed on maturation; it reads RQARADEAAAQQQPGADDQGMAHSFTRPENAALPLSESARGL. Residues 25–54 are disordered; it reads ARADEAAAQQQPGADDQGMAHSFTRPENAA. Low complexity predominate over residues 30 to 44; that stretch reads AAAQQQPGADDQGMA. Arg-65 is covalently cross-linked (Cyclopeptide (Arg-Cys) (interchain with C-73 in subunit A); in form RTD-1). A Cyclopeptide (Arg-Cys) (interchain with C-73 in subunit B); in form RTD-2 cross-link involves residue Arg-65. Residues Cys-68 and Cys-73 are joined by a disulfide bond. A Cyclopeptide (Cys-Arg) (interchain with R-65 in subunit A); in form RTD-1 cross-link involves residue Cys-73. A Cyclopeptide (Cys-Arg) (interchain with R-65 in subunit B); in form RTD-2 cross-link involves residue Cys-73. Positions 74 to 76 are excised as a propeptide; the sequence is QLL.

It belongs to the alpha-defensin family. Theta subfamily. RTD-1 is a cyclic heterodimer composed of subunits A and B; disulfide-linked. RTD-2 is a cyclic homodimer composed of two subunits B; disulfide-linked. Post-translationally, forms a cyclic peptide with 1 subunit B (RTD-2) or with 1 subunit A (RTD-1). An additional intersubunit disulfide bond is formed. RTD-1 is expressed in bone marrow. Detected in promyelocytes, myelocytes and mature neutrophils and monocytes.

Functionally, RTD-1 and RTD-2 have similar antimicrobial activities against the Gram-positive bacteria S.aureus 502A and L.monocytogenes, the Gram-negative bacterium S.typhimurium, and the fungi C.albicans 16820 and C.neoformans 271A. RTD-2 is 2-3-fold less active than RTD-1 against E.coli ML35. In Macaca mulatta (Rhesus macaque), this protein is Rhesus theta defensin-1/2 subunit B (RTD1B).